Reading from the N-terminus, the 1198-residue chain is Tetratricopeptide repeat protein 17 (1198 aa).

The TPR 1 repeat unit spans residues 295–328; that stretch reads FTSYYTLGNIYAMLGEYNHSVLCYDHALQAKPGF. Residues 340 to 382 adopt a coiled-coil conformation; it reads CQQKLEQKLEAQHRSLQRTLNELKEYQKQHDHYLRQQEILEKH. TPR repeat units follow at residues 619–652 and 689–722; these read WLILNEAGLYWRAVGNSTFAIACLQRALNLAPVQ and PLTFLSLGNAYLALKNVSGALEAFRQALKLTTRC. Disordered stretches follow at residues 771–825 and 903–924; these read PQSL…KSEE and KKPKGDHKKPPGKKVEASQAEN. Basic residues predominate over residues 903-914; it reads KKPKGDHKKPPG. TPR repeat units lie at residues 1071–1105, 1108–1141, and 1142–1175; these read SWVLSSMAALYWRVKGQGKKAIDCLRQALHYAPHQ, DVPLISLANILHNAKLWNDAVVVATMAVEIAPHF, and AVNHFTLGNVYVAMEEFEKALVWYESTLKLQPEF.

The protein belongs to the TTC17 family. Interacts with CATIP. As to expression, expressed in germ cells as well as in somatic cells of the testis (at protein level). Ubiquitous.

The protein localises to the cytoplasm. Its subcellular location is the cell membrane. The protein resides in the cytoskeleton. Plays a role in primary ciliogenesis by modulating actin polymerization. The polypeptide is Tetratricopeptide repeat protein 17 (Ttc17) (Rattus norvegicus (Rat)).